The following is an 883-amino-acid chain: Putative pentatricopeptide repeat-containing protein At1g13800 (883 aa).

PPR repeat units lie at residues 145-180 (LIRV…GRAP), 181-215 (DIKA…GLDA), 216-251 (DAHT…TRNP), 253-285 (VFYL…NILV), 290-324 (LGIA…GIDP), 325-359 (DVYV…RKRI), 360-394 (NCVI…NISL), 395-429 (DRVC…GIAP), 430-464 (DVIN…GKTP), 465-499 (DIVI…GVKP), 500-534 (TYVT…SREN), 537-561 (SMVK…LEFP), 563-598 (PKSV…GVEP), 599-633 (EKSM…KIVP), 634-668 (DLFT…DVKP), 697-731 (DVVY…EIVP), 760-794 (DVFY…GVDP), 795-829 (DAAP…GVKP), and 830-864 (DVVP…GIKP).

It belongs to the PPR family. P subfamily.

The sequence is that of Putative pentatricopeptide repeat-containing protein At1g13800 from Arabidopsis thaliana (Mouse-ear cress).